The sequence spans 215 residues: MAPGARISLLLLITFTLLGPQRSGAFPAMPLSSLFANAVLRAQHLHQLVADTYKEFERTYIPEAQRHSIQSTQTAFCFSETIPAPTGKDEAQQRSDVELLRFSLLLIQSWLSPVQFLSRVFTNSLVFGTSDRVYEKLRDLEEGIQALMQELEDGSSRGGLVLKTTYDKFDTNLRSDEALLKNYGLLSCFKKDLHKAETYLRVMKCRRFVESSCAF.

An N-terminal signal peptide occupies residues 1–25; that stretch reads MAPGARISLLLLITFTLLGPQRSGA. His44 contacts Zn(2+). A disulfide bridge connects residues Cys77 and Cys188. The residue at position 130 (Ser130) is a Phosphoserine. Glu197 provides a ligand contact to Zn(2+). Cys205 and Cys213 form a disulfide bridge.

The protein belongs to the somatotropin/prolactin family.

The protein localises to the secreted. Plays an important role in growth control. Its major role in stimulating body growth is to stimulate the liver and other tissues to secrete IGF1. It stimulates both the differentiation and proliferation of myoblasts. It also stimulates amino acid uptake and protein synthesis in muscle and other tissues. The chain is Somatotropin (GH1) from Trichosurus vulpecula (Brush-tailed possum).